The chain runs to 155 residues: Aspartate carbamoyltransferase regulatory chain (155 aa).

The Zn(2+) site is built by cysteine 113, cysteine 118, cysteine 139, and cysteine 142.

The protein belongs to the PyrI family. As to quaternary structure, contains catalytic and regulatory chains. It depends on Zn(2+) as a cofactor.

Its function is as follows. Involved in allosteric regulation of aspartate carbamoyltransferase. The protein is Aspartate carbamoyltransferase regulatory chain of Methanoculleus marisnigri (strain ATCC 35101 / DSM 1498 / JR1).